Consider the following 49-residue polypeptide: U6-myrmicitoxin-Mri1a (49 aa).

The signal sequence occupies residues 1 to 27 (MNPKALCSFLLATFLLLTVTIMPSVHA). Positions 28–35 (NAEANADA) are excised as a propeptide.

Contains 1 disulfide bond. As to expression, expressed by the venom gland.

It is found in the secreted. This is U6-myrmicitoxin-Mri1a from Manica rubida (European giant red ant).